The sequence spans 223 residues: uncharacterized protein (223 aa).

4 consecutive transmembrane segments (helical) span residues 22–42, 59–79, 85–105, and 164–184; these read LTVG…FVVV, GVAL…ATLI, IFSL…WCSM, and MAWA…SQAF.

It belongs to the Rht family.

It is found in the cell membrane. This is an uncharacterized protein from Escherichia coli (strain K12).